The sequence spans 262 residues: Mediator of RNA polymerase II transcription subunit 8 (262 aa).

Positions 168–211 form a coiled coil; the sequence is LEEKEMGVKNVITGLKRQLDEGDEEDEEEEEEEEDMQGEEMEVV. A disordered region spans residues 183-206; that stretch reads KRQLDEGDEEDEEEEEEEEDMQGE. Residues 188-206 show a composition bias toward acidic residues; the sequence is EGDEEDEEEEEEEEDMQGE.

This sequence belongs to the Mediator complex subunit 8 family. As to quaternary structure, component of the Mediator complex.

It localises to the nucleus. Functionally, component of the Mediator complex, a coactivator involved in the regulated transcription of nearly all RNA polymerase II-dependent genes. Mediator functions as a bridge to convey information from gene-specific regulatory proteins to the basal RNA polymerase II transcription machinery. Mediator is recruited to promoters by direct interactions with regulatory proteins and serves as a scaffold for the assembly of a functional preinitiation complex with RNA polymerase II and the general transcription factors. The chain is Mediator of RNA polymerase II transcription subunit 8 (MED8) from Coccidioides immitis (strain RS) (Valley fever fungus).